Consider the following 871-residue polypeptide: Coatomer subunit gamma-2 (871 aa).

Positions 1-11 (MIKKFDKKDEE) are enriched in basic and acidic residues. A disordered region spans residues 1–20 (MIKKFDKKDEESGSGSNPFR). HEAT repeat units lie at residues 64–101 (TEATEAFFAMTRLFQSNDQTLRRMCYLTIKEMATISED), 283–320 (RELAPAVSVLQLFCSSPKPALRYAAVRTLNKVAMKHPS), 321–355 (AVTACNLDLENLITDSNRSIATLAITTLLKTGSES), 356–392 (SVDRLMKQISSFVSEISDEFKVVVVQAISALCQKYPR), 395–430 (SVMMTFLSNMLRDDGGFEYKRAIVDCIIHIVEENPE), and 467–504 (PVPSKYIRFIFNRVVLENEAVRAAAVSALAKFGAQNEN). A Phosphothreonine modification is found at threonine 594.

The protein belongs to the COPG family. Oligomeric complex. Binds to CDC42. Interacts with JAGN1. Interacts with TMED10 (via cytoplasmic domain).

Its subcellular location is the cytoplasm. It localises to the cytosol. The protein resides in the golgi apparatus membrane. It is found in the cytoplasmic vesicle. The protein localises to the COPI-coated vesicle membrane. Functionally, the coatomer is a cytosolic protein complex that binds to dilysine motifs and reversibly associates with Golgi non-clathrin-coated vesicles, which further mediate biosynthetic protein transport from the ER, via the Golgi up to the trans Golgi network. Coatomer complex is required for budding from Golgi membranes, and is essential for the retrograde Golgi-to-ER transport of dilysine-tagged proteins. In mammals, the coatomer can only be recruited by membranes associated to ADP-ribosylation factors (ARFs), which are small GTP-binding proteins; the complex also influences the Golgi structural integrity, as well as the processing, activity, and endocytic recycling of LDL receptors. In Bos taurus (Bovine), this protein is Coatomer subunit gamma-2 (COPG2).